Here is a 225-residue protein sequence, read N- to C-terminus: Cytidylate kinase (225 aa).

10–18 (GPASSGKST) is a binding site for ATP.

This sequence belongs to the cytidylate kinase family. Type 1 subfamily.

It is found in the cytoplasm. It carries out the reaction CMP + ATP = CDP + ADP. The catalysed reaction is dCMP + ATP = dCDP + ADP. The polypeptide is Cytidylate kinase (Streptococcus sanguinis (strain SK36)).